A 343-amino-acid chain; its full sequence is S-adenosylmethionine:tRNA ribosyltransferase-isomerase (343 aa).

The protein belongs to the QueA family. As to quaternary structure, monomer.

The protein resides in the cytoplasm. It catalyses the reaction 7-aminomethyl-7-carbaguanosine(34) in tRNA + S-adenosyl-L-methionine = epoxyqueuosine(34) in tRNA + adenine + L-methionine + 2 H(+). It functions in the pathway tRNA modification; tRNA-queuosine biosynthesis. In terms of biological role, transfers and isomerizes the ribose moiety from AdoMet to the 7-aminomethyl group of 7-deazaguanine (preQ1-tRNA) to give epoxyqueuosine (oQ-tRNA). This chain is S-adenosylmethionine:tRNA ribosyltransferase-isomerase, found in Geobacter metallireducens (strain ATCC 53774 / DSM 7210 / GS-15).